Here is a 360-residue protein sequence, read N- to C-terminus: 3-dehydroquinate synthase (360 aa).

NAD(+) is bound by residues 72–77, 106–110, 130–131, K143, K152, and 170–173; these read DGEEFK, GVVGD, TT, and TLTT. Zn(2+)-binding residues include E185, H248, and H265.

This sequence belongs to the sugar phosphate cyclases superfamily. Dehydroquinate synthase family. The cofactor is Co(2+). Requires Zn(2+) as cofactor. It depends on NAD(+) as a cofactor.

The protein localises to the cytoplasm. The catalysed reaction is 7-phospho-2-dehydro-3-deoxy-D-arabino-heptonate = 3-dehydroquinate + phosphate. It participates in metabolic intermediate biosynthesis; chorismate biosynthesis; chorismate from D-erythrose 4-phosphate and phosphoenolpyruvate: step 2/7. Its function is as follows. Catalyzes the conversion of 3-deoxy-D-arabino-heptulosonate 7-phosphate (DAHP) to dehydroquinate (DHQ). The polypeptide is 3-dehydroquinate synthase (Geobacter metallireducens (strain ATCC 53774 / DSM 7210 / GS-15)).